The sequence spans 632 residues: Phospholipid:diacylglycerol acyltransferase (632 aa).

Residues 1–15 show a composition bias toward basic residues; sequence MASSKKSKTHKKKKE. Residues 1-47 form a disordered region; it reads MASSKKSKTHKKKKEVKSPIDLPNSKKPTRALSEQPSASETQSVSNK. Topologically, residues 1 to 56 are cytoplasmic; the sequence is MASSKKSKTHKKKKEVKSPIDLPNSKKPTRALSEQPSASETQSVSNKSRKSKFGKR. Positions 32–46 are enriched in polar residues; it reads LSEQPSASETQSVSN. Residues 57-77 traverse the membrane as a helical segment; the sequence is LNFILGAILGICGAFFFAVGD. Over 78-632 the chain is Lumenal; the sequence is DNAVFDPATL…NEINLDKPRN (555 aa). A substrate-binding site is contributed by Asp-136. Ser-293 serves as the catalytic Acyl-ester intermediate. Residue Met-294 coordinates substrate. Residues Asp-535 and His-586 each act as charge relay system in the active site.

This sequence belongs to the AB hydrolase superfamily. Lipase family.

It localises to the endoplasmic reticulum membrane. The enzyme catalyses a glycerophospholipid + a 1,2-diacyl-sn-glycerol = a monoacylglycerophospholipid + a triacyl-sn-glycerol. Its pathway is glycerolipid metabolism; triacylglycerol biosynthesis. Catalyzes triacylglycerol (TAG) formation by an acyl-CoA independent pathway. The enzyme specifically transfers acyl groups from the sn-2 position of a phospholipid to diacylglycerol (DAG), thus forming an sn-1-lysophospholipid. Plays a major role in triacylglycerol formation at log phase. Involved in lipid particle synthesis from the endoplasmic reticulum, promoting localized TAG production at discrete ER subdomains. This is Phospholipid:diacylglycerol acyltransferase (plh1) from Schizosaccharomyces pombe (strain 972 / ATCC 24843) (Fission yeast).